The primary structure comprises 161 residues: Regulator of ribonuclease activity A (161 aa).

Belongs to the RraA family. In terms of assembly, homotrimer. Binds to both RNA-binding sites in the C-terminal region of Rne and to RhlB.

The protein resides in the cytoplasm. Functionally, globally modulates RNA abundance by binding to RNase E (Rne) and regulating its endonucleolytic activity. Can modulate Rne action in a substrate-dependent manner by altering the composition of the degradosome. Modulates RNA-binding and helicase activities of the degradosome. The polypeptide is Regulator of ribonuclease activity A (Yersinia pseudotuberculosis serotype O:1b (strain IP 31758)).